The following is a 219-amino-acid chain: Oxaloacetate tautomerase YcgM (219 aa).

3 residues coordinate Mg(2+): Glu70, Glu72, and Asp101.

It belongs to the FAH family. The cofactor is a divalent metal cation.

It carries out the reaction oxaloacetate = enol-oxaloacetate. Functionally, tautomerase that converts enol-oxaloacetate to the keto form of oxaloacetate. The sequence is that of Oxaloacetate tautomerase YcgM from Escherichia coli (strain K12).